Consider the following 279-residue polypeptide: Ferredoxin-type protein NapG (279 aa).

Residues 1–50 constitute a signal peptide (tat-type signal); it reads MKVRLKSKKKMKKPALNPERRKFLKEATRTAGGLAGVGILLGLQQNQSLA. 4 4Fe-4S ferredoxin-type domains span residues 63 to 92, 100 to 132, 141 to 177, and 188 to 219; these read QDAK…LASL, TPYF…RQAT, LSVL…LETQ, and FIPT…ILPM. [4Fe-4S] cluster-binding residues include Cys72, Cys75, Cys78, Cys82, Cys110, Cys113, Cys118, Cys122, Cys150, Cys158, Cys161, Cys165, Cys197, Cys200, Cys203, and Cys207.

The cofactor is [4Fe-4S] cluster. Post-translationally, predicted to be exported by the Tat system. The position of the signal peptide cleavage has not been experimentally proven.

Its subcellular location is the periplasm. Required for electron transfer from ubiquinol, via NapC, to the periplasmic nitrate reductase NapAB complex. The polypeptide is Ferredoxin-type protein NapG (napG) (Haemophilus influenzae (strain ATCC 51907 / DSM 11121 / KW20 / Rd)).